The primary structure comprises 24 residues: Snake venom metalloproteinase Batx-1 (24 aa).

Residues 1-24 (YIELAVVADHGIFTKYNSNLNTIR) enclose the Peptidase M12B domain. Glu3 contacts Ca(2+).

It belongs to the venom metalloproteinase (M12B) family. P-I subfamily. In terms of assembly, monomer. Requires Zn(2+) as cofactor. The N-terminus is blocked. In terms of processing, contains 3 disulfide bonds. In terms of tissue distribution, expressed by the venom gland.

It is found in the secreted. Its activity is regulated as follows. Inhibited by EDTA, and o-phenanthroline, but not inhibited by PMSF, pepstatin A, and aprotinin. Its function is as follows. Zinc metalloproteinase that exhits a weak hemorrhagic activity. Degrades preferentially the Aalpha- (FGA) and Bbeta-chains (FGB) of fibrinogen, and partially degrades gamma-chain (FGG) at higher concentration. Induces a mild myotoxicity, but lacks coagulant activity on human plasma or bovin fibrinogen and defibrinating activity. The protein is Snake venom metalloproteinase Batx-1 of Bothrops atrox (Barba amarilla).